Consider the following 188-residue polypeptide: GMP synthase [glutamine-hydrolyzing] subunit A (188 aa).

The region spanning 1–188 (MIIIMDNGGQ…RNFAKICGEL (188 aa)) is the Glutamine amidotransferase type-1 domain. The Nucleophile role is filled by cysteine 78. Residues histidine 165 and glutamate 167 contribute to the active site.

Heterodimer composed of a glutamine amidotransferase subunit (A) and a GMP-binding subunit (B).

It carries out the reaction XMP + L-glutamine + ATP + H2O = GMP + L-glutamate + AMP + diphosphate + 2 H(+). The protein operates within purine metabolism; GMP biosynthesis; GMP from XMP (L-Gln route): step 1/1. In terms of biological role, catalyzes the synthesis of GMP from XMP. The chain is GMP synthase [glutamine-hydrolyzing] subunit A from Pyrococcus furiosus (strain ATCC 43587 / DSM 3638 / JCM 8422 / Vc1).